We begin with the raw amino-acid sequence, 299 residues long: Glycerol-3-phosphate dehydrogenase [NAD(P)+] (299 aa).

NADPH-binding residues include Trp11, Arg30, His31, and Lys79. Sn-glycerol 3-phosphate-binding residues include Lys79, Gly107, and Ser109. Ala111 contacts NADPH. Lys161, Asp214, Ser224, Arg225, and Asn226 together coordinate sn-glycerol 3-phosphate. The active-site Proton acceptor is Lys161. Arg225 serves as a coordination point for NADPH. Residues Val249 and Glu251 each contribute to the NADPH site.

It belongs to the NAD-dependent glycerol-3-phosphate dehydrogenase family.

It localises to the cytoplasm. The catalysed reaction is sn-glycerol 3-phosphate + NAD(+) = dihydroxyacetone phosphate + NADH + H(+). It catalyses the reaction sn-glycerol 3-phosphate + NADP(+) = dihydroxyacetone phosphate + NADPH + H(+). The protein operates within membrane lipid metabolism; glycerophospholipid metabolism. Its function is as follows. Catalyzes the reduction of the glycolytic intermediate dihydroxyacetone phosphate (DHAP) to sn-glycerol 3-phosphate (G3P), the key precursor for phospholipid synthesis. In Nitratiruptor sp. (strain SB155-2), this protein is Glycerol-3-phosphate dehydrogenase [NAD(P)+].